The chain runs to 155 residues: Large ribosomal subunit protein eL24B (155 aa).

S7 is subject to Phosphoserine. The disordered stretch occupies residues 66–155 (EVAKKRSRKT…AFQKVAATSR (90 aa)). Basic and acidic residues predominate over residues 89–129 (LIKERRSLKPEVRKANREEKLKANKEKKRAEKAARKAEKAK).

This sequence belongs to the eukaryotic ribosomal protein eL24 family. As to quaternary structure, component of the large ribosomal subunit (LSU). Mature yeast ribosomes consist of a small (40S) and a large (60S) subunit. The 40S small subunit contains 1 molecule of ribosomal RNA (18S rRNA) and 33 different proteins (encoded by 57 genes). The large 60S subunit contains 3 rRNA molecules (25S, 5.8S and 5S rRNA) and 46 different proteins (encoded by 81 genes).

It is found in the cytoplasm. Component of the ribosome, a large ribonucleoprotein complex responsible for the synthesis of proteins in the cell. The small ribosomal subunit (SSU) binds messenger RNAs (mRNAs) and translates the encoded message by selecting cognate aminoacyl-transfer RNA (tRNA) molecules. The large subunit (LSU) contains the ribosomal catalytic site termed the peptidyl transferase center (PTC), which catalyzes the formation of peptide bonds, thereby polymerizing the amino acids delivered by tRNAs into a polypeptide chain. The nascent polypeptides leave the ribosome through a tunnel in the LSU and interact with protein factors that function in enzymatic processing, targeting, and the membrane insertion of nascent chains at the exit of the ribosomal tunnel. This chain is Large ribosomal subunit protein eL24B, found in Saccharomyces cerevisiae (strain ATCC 204508 / S288c) (Baker's yeast).